Consider the following 217-residue polypeptide: Small ribosomal subunit protein uS3 (217 aa).

Residues 40-110 (IRDLINNSFN…EVYINIHEVR (71 aa)) form the KH type-2 domain.

The protein belongs to the universal ribosomal protein uS3 family. As to quaternary structure, part of the 30S ribosomal subunit. Forms a tight complex with proteins S10 and S14.

Its function is as follows. Binds the lower part of the 30S subunit head. Binds mRNA in the 70S ribosome, positioning it for translation. The chain is Small ribosomal subunit protein uS3 from Rickettsia canadensis (strain McKiel).